The sequence spans 218 residues: Small ribosomal subunit protein uS5 (218 aa).

The 64-residue stretch at Leu66 to Val129 folds into the S5 DRBM domain.

This sequence belongs to the universal ribosomal protein uS5 family. In terms of assembly, part of the 30S ribosomal subunit. Contacts protein S4.

With S4 and S12 plays an important role in translational accuracy. In Pyrobaculum aerophilum (strain ATCC 51768 / DSM 7523 / JCM 9630 / CIP 104966 / NBRC 100827 / IM2), this protein is Small ribosomal subunit protein uS5.